The chain runs to 418 residues: Serine--tRNA ligase (418 aa).

231 to 233 is a binding site for L-serine; sequence TAE. ATP is bound at residue 262-264; that stretch reads RSE. Glu285 is a binding site for L-serine. 349–352 is a binding site for ATP; sequence EISS. Ser385 contributes to the L-serine binding site.

The protein belongs to the class-II aminoacyl-tRNA synthetase family. Type-1 seryl-tRNA synthetase subfamily. In terms of assembly, homodimer. The tRNA molecule binds across the dimer.

Its subcellular location is the cytoplasm. The catalysed reaction is tRNA(Ser) + L-serine + ATP = L-seryl-tRNA(Ser) + AMP + diphosphate + H(+). The enzyme catalyses tRNA(Sec) + L-serine + ATP = L-seryl-tRNA(Sec) + AMP + diphosphate + H(+). Its pathway is aminoacyl-tRNA biosynthesis; selenocysteinyl-tRNA(Sec) biosynthesis; L-seryl-tRNA(Sec) from L-serine and tRNA(Sec): step 1/1. Functionally, catalyzes the attachment of serine to tRNA(Ser). Is also able to aminoacylate tRNA(Sec) with serine, to form the misacylated tRNA L-seryl-tRNA(Sec), which will be further converted into selenocysteinyl-tRNA(Sec). The chain is Serine--tRNA ligase from Ureaplasma urealyticum serovar 10 (strain ATCC 33699 / Western).